A 421-amino-acid polypeptide reads, in one-letter code: Zinc finger protein 584 (421 aa).

The region spanning 17–88 is the KRAB domain; the sequence is VMFEDVTVYF…SWVDVTPVSR (72 aa). Over residues 120–129 the composition is skewed to basic and acidic residues; that stretch reads QHQDTHSEGK. The interval 120–146 is disordered; sequence QHQDTHSEGKPRRHTEHGAAFPPGSSC. C2H2-type zinc fingers lie at residues 159–181, 214–236, 242–264, 270–292, 298–320, 326–348, 354–376, and 382–404; these read FKCS…LITH, HVCN…QKVH, FKCS…QRIH, YECS…RKVH, YECT…QRVH, FECK…WKVH, YECS…QQFH, and YECT…KKVH. Positions 402 to 421 are disordered; the sequence is KVHTPERRQEDRAHGKVVSC. Over residues 404–415 the composition is skewed to basic and acidic residues; sequence HTPERRQEDRAH.

The protein belongs to the krueppel C2H2-type zinc-finger protein family.

It is found in the nucleus. Its function is as follows. May be involved in transcriptional regulation. In Homo sapiens (Human), this protein is Zinc finger protein 584 (ZNF584).